Here is a 210-residue protein sequence, read N- to C-terminus: Keratin-associated protein 26-1 (210 aa).

The protein belongs to the PMG family. In terms of assembly, interacts with hair keratins. As to expression, localized high up in the well differentiated portion of the hair follicle cuticle (about 10-15 cell layers above the apex of the dermal papilla).

Functionally, in the hair cortex, hair keratin intermediate filaments are embedded in an interfilamentous matrix, consisting of hair keratin-associated proteins (KRTAP), which are essential for the formation of a rigid and resistant hair shaft through their extensive disulfide bond cross-linking with abundant cysteine residues of hair keratins. The matrix proteins include the high-sulfur and high-glycine-tyrosine keratins. This Homo sapiens (Human) protein is Keratin-associated protein 26-1 (KRTAP26-1).